Here is a 96-residue protein sequence, read N- to C-terminus: MRHYEVMVILDPDLEERSVSPLIENFLSVVRDGGGKVEKVDTWGRRRLSYEIKKKPEGIYSVIDLQAEPAVVKELDRQMNLNESVLRTKVLRPEMH.

The protein belongs to the bacterial ribosomal protein bS6 family.

Binds together with bS18 to 16S ribosomal RNA. In Streptomyces coelicolor (strain ATCC BAA-471 / A3(2) / M145), this protein is Small ribosomal subunit protein bS6 (rpsF).